The primary structure comprises 434 residues: Methylenetetrahydrofolate--tRNA-(uracil-5-)-methyltransferase TrmFO (434 aa).

9-14 provides a ligand contact to FAD; it reads GAGLAG.

The protein belongs to the MnmG family. TrmFO subfamily. It depends on FAD as a cofactor.

The protein resides in the cytoplasm. The enzyme catalyses uridine(54) in tRNA + (6R)-5,10-methylene-5,6,7,8-tetrahydrofolate + NADH + H(+) = 5-methyluridine(54) in tRNA + (6S)-5,6,7,8-tetrahydrofolate + NAD(+). It carries out the reaction uridine(54) in tRNA + (6R)-5,10-methylene-5,6,7,8-tetrahydrofolate + NADPH + H(+) = 5-methyluridine(54) in tRNA + (6S)-5,6,7,8-tetrahydrofolate + NADP(+). Its function is as follows. Catalyzes the folate-dependent formation of 5-methyl-uridine at position 54 (M-5-U54) in all tRNAs. The chain is Methylenetetrahydrofolate--tRNA-(uracil-5-)-methyltransferase TrmFO from Bacillus pumilus (strain SAFR-032).